We begin with the raw amino-acid sequence, 517 residues long: GMP synthase [glutamine-hydrolyzing] (517 aa).

A Glutamine amidotransferase type-1 domain is found at 9 to 199; that stretch reads RILILDFGSQ…VLNVCGCEGL (191 aa). C86 serves as the catalytic Nucleophile. Catalysis depends on residues H173 and E175. Residues 200-392 enclose the GMPS ATP-PPase domain; that stretch reads WTSASIIEDA…LGLPYNMLYR (193 aa). 227 to 233 provides a ligand contact to ATP; it reads SGGVDSS.

As to quaternary structure, homodimer.

It carries out the reaction XMP + L-glutamine + ATP + H2O = GMP + L-glutamate + AMP + diphosphate + 2 H(+). The protein operates within purine metabolism; GMP biosynthesis; GMP from XMP (L-Gln route): step 1/1. Functionally, catalyzes the synthesis of GMP from XMP. This chain is GMP synthase [glutamine-hydrolyzing], found in Aliivibrio salmonicida (strain LFI1238) (Vibrio salmonicida (strain LFI1238)).